The sequence spans 298 residues: Aclacinomycin methylesterase RdmC (298 aa).

The 254-residue stretch at 24–277 folds into the AB hydrolase-1 domain; it reads PALLLVMGGN…LAEIPGMGHA (254 aa). Residues Ser-102, Asp-248, and His-276 contribute to the active site.

This sequence belongs to the AB hydrolase superfamily. Hydrolase RdmC family. Monomer.

The enzyme catalyses aclacinomycin T + H2O = 15-demethylaclacinomycin T + methanol. The protein operates within antibiotic biosynthesis; aclacinomycin biosynthesis. Its function is as follows. Involved in the biosynthesis of the anthracycline aclacinomycin which is an aromatic polyketide antibiotic that exhibits high cytotoxicity and is widely applied in the chemotherapy of a variety of cancers. Catalyzes the removal of the methoxy group from the C-15 position of aclacinomycin T and A to yield 15-demethoxyaclacinomycin T and A, respectively. The polypeptide is Aclacinomycin methylesterase RdmC (rdmC) (Streptomyces purpurascens).